Reading from the N-terminus, the 354-residue chain is tRNA N6-adenosine threonylcarbamoyltransferase (354 aa).

Fe cation-binding residues include His-115 and His-119. Substrate contacts are provided by residues Leu-138–Gly-142, Asp-171, Gly-184, and Asn-276. Residue Asp-304 participates in Fe cation binding.

It belongs to the KAE1 / TsaD family. Fe(2+) serves as cofactor.

Its subcellular location is the cytoplasm. It carries out the reaction L-threonylcarbamoyladenylate + adenosine(37) in tRNA = N(6)-L-threonylcarbamoyladenosine(37) in tRNA + AMP + H(+). Its function is as follows. Required for the formation of a threonylcarbamoyl group on adenosine at position 37 (t(6)A37) in tRNAs that read codons beginning with adenine. Is involved in the transfer of the threonylcarbamoyl moiety of threonylcarbamoyl-AMP (TC-AMP) to the N6 group of A37, together with TsaE and TsaB. TsaD likely plays a direct catalytic role in this reaction. This Xanthomonas oryzae pv. oryzae (strain MAFF 311018) protein is tRNA N6-adenosine threonylcarbamoyltransferase.